A 326-amino-acid chain; its full sequence is Protein C10 (326 aa).

The protein belongs to the poxviridae C4/C10 protein family.

The sequence is that of Protein C10 from Homo sapiens (Human).